The chain runs to 349 residues: N-acetyl-gamma-glutamyl-phosphate reductase (349 aa).

The active site involves C149.

Belongs to the NAGSA dehydrogenase family. Type 1 subfamily.

Its subcellular location is the cytoplasm. It carries out the reaction N-acetyl-L-glutamate 5-semialdehyde + phosphate + NADP(+) = N-acetyl-L-glutamyl 5-phosphate + NADPH + H(+). It functions in the pathway amino-acid biosynthesis; L-arginine biosynthesis; N(2)-acetyl-L-ornithine from L-glutamate: step 3/4. In terms of biological role, catalyzes the NADPH-dependent reduction of N-acetyl-5-glutamyl phosphate to yield N-acetyl-L-glutamate 5-semialdehyde. The sequence is that of N-acetyl-gamma-glutamyl-phosphate reductase from Acinetobacter baumannii (strain AB307-0294).